The primary structure comprises 188 residues: Elongation factor P (188 aa).

This sequence belongs to the elongation factor P family.

Its subcellular location is the cytoplasm. Its pathway is protein biosynthesis; polypeptide chain elongation. In terms of biological role, involved in peptide bond synthesis. Stimulates efficient translation and peptide-bond synthesis on native or reconstituted 70S ribosomes in vitro. Probably functions indirectly by altering the affinity of the ribosome for aminoacyl-tRNA, thus increasing their reactivity as acceptors for peptidyl transferase. This is Elongation factor P from Gluconacetobacter diazotrophicus (strain ATCC 49037 / DSM 5601 / CCUG 37298 / CIP 103539 / LMG 7603 / PAl5).